The following is a 499-amino-acid chain: Bifunctional purine biosynthesis protein PurH (499 aa).

Positions 1–144 constitute an MGS-like domain; it reads MINRALISVY…KNFKDVIVVT (144 aa).

It belongs to the PurH family.

The catalysed reaction is (6R)-10-formyltetrahydrofolate + 5-amino-1-(5-phospho-beta-D-ribosyl)imidazole-4-carboxamide = 5-formamido-1-(5-phospho-D-ribosyl)imidazole-4-carboxamide + (6S)-5,6,7,8-tetrahydrofolate. It catalyses the reaction IMP + H2O = 5-formamido-1-(5-phospho-D-ribosyl)imidazole-4-carboxamide. Its pathway is purine metabolism; IMP biosynthesis via de novo pathway; 5-formamido-1-(5-phospho-D-ribosyl)imidazole-4-carboxamide from 5-amino-1-(5-phospho-D-ribosyl)imidazole-4-carboxamide (10-formyl THF route): step 1/1. It participates in purine metabolism; IMP biosynthesis via de novo pathway; IMP from 5-formamido-1-(5-phospho-D-ribosyl)imidazole-4-carboxamide: step 1/1. The chain is Bifunctional purine biosynthesis protein PurH from Clostridium kluyveri (strain NBRC 12016).